A 304-amino-acid polypeptide reads, in one-letter code: Coenzyme PQQ synthesis protein B (304 aa).

This sequence belongs to the PqqB family.

It participates in cofactor biosynthesis; pyrroloquinoline quinone biosynthesis. In terms of biological role, may be involved in the transport of PQQ or its precursor to the periplasm. The chain is Coenzyme PQQ synthesis protein B from Azoarcus sp. (strain BH72).